Reading from the N-terminus, the 138-residue chain is Probable lactoylglutathione lyase (138 aa).

Residues 5 to 129 (RILHTMLRVG…DGYMIELIQN (125 aa)) form the VOC domain. His8 is a Ni(2+) binding site. Residue Arg12 participates in substrate binding. A Ni(2+)-binding site is contributed by Glu59. Asn63 and His77 together coordinate substrate. Ni(2+) contacts are provided by His77 and Glu125. Catalysis depends on Glu125, which acts as the Proton donor/acceptor.

It belongs to the glyoxalase I family. It depends on Ni(2+) as a cofactor.

The catalysed reaction is (R)-S-lactoylglutathione = methylglyoxal + glutathione. It participates in secondary metabolite metabolism; methylglyoxal degradation; (R)-lactate from methylglyoxal: step 1/2. In terms of biological role, catalyzes the conversion of hemimercaptal, formed from methylglyoxal and glutathione, to S-lactoylglutathione. This chain is Probable lactoylglutathione lyase (gloA), found in Vibrio parahaemolyticus serotype O3:K6 (strain RIMD 2210633).